Here is a 300-residue protein sequence, read N- to C-terminus: MRFLAFLLCLVPLALCIIEPRGIDGPTSHEAPTDLPIDWHILSQAAGMAHEPYCLFGDIGDRVGDAEVLWSKGHGVVIQRVKIFHSKSLGVTVSFEGTTASLLSILHDVNAALIDPPKEVAPAYCEGVKLFAGFSNAYMELRDEVYEQIVKFQKQFNDKRVTTTGHSLGAAMAVLAAMDLNKRLDDGIYRSFAFGMPRTGNGAFANDVDKKIGGRFFYIVNGRDWVPRVLPRELGFQHPSGQIWINPPSTTHWKYYPGQENHYGANSEDPILTFDDHHGIYFHTGLGHGPGKCPASVGTA.

The N-terminal stretch at 1 to 16 (MRFLAFLLCLVPLALC) is a signal peptide. Cysteines 54 and 293 form a disulfide. Serine 167 functions as the Nucleophile in the catalytic mechanism. Residue aspartate 224 is part of the active site.

The protein belongs to the AB hydrolase superfamily. Lipase family. Class 3 subfamily.

The protein localises to the secreted. It catalyses the reaction a monoacylglycerol + H2O = glycerol + a fatty acid + H(+). It carries out the reaction a diacylglycerol + H2O = a monoacylglycerol + a fatty acid + H(+). In terms of biological role, secreted lipase involved in Dandruff and seborrheic dermatitis (D/SD) probably via lipase-mediated breakdown of sebaceous lipids and release of irritating free fatty acids. Shows activity against monoglyceride and diglyceride substrates. Due to an absence of fatty acid synthase genes in Malassezia species, secretory lipases are essential for the yeast to generate free fatty acids from degradation of sebum and assimilate them as lipid sources for growth. Plays an essential role at the pathogen-host interface during disease progression. The sequence is that of Secreted mono- and diacylglycerol lipase LIP4 from Malassezia restricta (Seborrheic dermatitis infection agent).